Here is a 789-residue protein sequence, read N- to C-terminus: Protein translocase subunit SecA (789 aa).

ATP-binding positions include glutamine 85, 103-107, and aspartate 492; that span reads GEGKT.

It belongs to the SecA family. Monomer and homodimer. Part of the essential Sec protein translocation apparatus which comprises SecA, SecYEG and auxiliary proteins SecDF. Other proteins may also be involved.

The protein localises to the cell membrane. It is found in the cytoplasm. It carries out the reaction ATP + H2O + cellular proteinSide 1 = ADP + phosphate + cellular proteinSide 2.. Functionally, part of the Sec protein translocase complex. Interacts with the SecYEG preprotein conducting channel. Has a central role in coupling the hydrolysis of ATP to the transfer of proteins into and across the cell membrane, serving as an ATP-driven molecular motor driving the stepwise translocation of polypeptide chains across the membrane. This Limosilactobacillus fermentum (strain NBRC 3956 / LMG 18251) (Lactobacillus fermentum) protein is Protein translocase subunit SecA.